The chain runs to 106 residues: Thiosulfate sulfurtransferase GlpE (106 aa).

In terms of domain architecture, Rhodanese spans 17 to 105; sequence QLPSVCLADI…WRHVYPYTAT (89 aa). The active-site Cysteine persulfide intermediate is C65.

This sequence belongs to the GlpE family.

The protein localises to the cytoplasm. It catalyses the reaction thiosulfate + hydrogen cyanide = thiocyanate + sulfite + 2 H(+). It carries out the reaction thiosulfate + [thioredoxin]-dithiol = [thioredoxin]-disulfide + hydrogen sulfide + sulfite + 2 H(+). In terms of biological role, transferase that catalyzes the transfer of sulfur from thiosulfate to thiophilic acceptors such as cyanide or dithiols. May function in a CysM-independent thiosulfate assimilation pathway by catalyzing the conversion of thiosulfate to sulfite, which can then be used for L-cysteine biosynthesis. This chain is Thiosulfate sulfurtransferase GlpE, found in Tolumonas auensis (strain DSM 9187 / NBRC 110442 / TA 4).